Here is a 237-residue protein sequence, read N- to C-terminus: Sugar fermentation stimulation protein homolog (237 aa).

It belongs to the SfsA family.

The chain is Sugar fermentation stimulation protein homolog from Colwellia psychrerythraea (strain 34H / ATCC BAA-681) (Vibrio psychroerythus).